A 247-amino-acid polypeptide reads, in one-letter code: Cytochrome c oxidase subunit 2 (247 aa).

Over methionine 1–asparagine 38 the chain is Mitochondrial intermembrane. A helical membrane pass occupies residues valine 39–leucine 58. Residues threonine 59 to glutamate 78 lie on the Mitochondrial matrix side of the membrane. A helical membrane pass occupies residues methionine 79 to cysteine 103. Over aspartate 104–glutamine 247 the chain is Mitochondrial intermembrane. The Cu cation site is built by histidine 182, cysteine 217, glutamate 219, cysteine 221, histidine 225, and methionine 228. Residue glutamate 219 participates in Mg(2+) binding.

This sequence belongs to the cytochrome c oxidase subunit 2 family. In terms of assembly, component of the cytochrome c oxidase (complex IV, CIV), a multisubunit enzyme composed of a catalytic core of 3 subunits and several supernumerary subunits. The complex exists as a monomer or a dimer and forms supercomplexes (SCs) in the inner mitochondrial membrane with ubiquinol-cytochrome c oxidoreductase (cytochrome b-c1 complex, complex III, CIII). The cofactor is Cu cation.

It is found in the mitochondrion inner membrane. It carries out the reaction 4 Fe(II)-[cytochrome c] + O2 + 8 H(+)(in) = 4 Fe(III)-[cytochrome c] + 2 H2O + 4 H(+)(out). In terms of biological role, component of the cytochrome c oxidase, the last enzyme in the mitochondrial electron transport chain which drives oxidative phosphorylation. The respiratory chain contains 3 multisubunit complexes succinate dehydrogenase (complex II, CII), ubiquinol-cytochrome c oxidoreductase (cytochrome b-c1 complex, complex III, CIII) and cytochrome c oxidase (complex IV, CIV), that cooperate to transfer electrons derived from NADH and succinate to molecular oxygen, creating an electrochemical gradient over the inner membrane that drives transmembrane transport and the ATP synthase. Cytochrome c oxidase is the component of the respiratory chain that catalyzes the reduction of oxygen to water. Electrons originating from reduced cytochrome c in the intermembrane space (IMS) are transferred via the dinuclear copper A center (CU(A)) of subunit 2 and heme A of subunit 1 to the active site in subunit 1, a binuclear center (BNC) formed by heme A3 and copper B (CU(B)). The BNC reduces molecular oxygen to 2 water molecules using 4 electrons from cytochrome c in the IMS and 4 protons from the mitochondrial matrix. The sequence is that of Cytochrome c oxidase subunit 2 (COX2) from Brettanomyces custersianus (Yeast).